The primary structure comprises 350 residues: Heme A synthase (350 aa).

A run of 8 helical transmembrane segments spans residues 16 to 36 (LARWLFVVAFMVVAIVAVGGI), 77 to 97 (FQLVNGPAGMTLATYKFIFFW), 101 to 121 (HRLLARTIGLVFAAPLAWFWI), 136 to 156 (LLALGALQGAVGWWMVKSGIV), 170 to 190 (LLVALFTLGGLVWTALDLVAL), 201 to 221 (GIGLLALAMLVLQLFYGALVA), 265 to 285 (VFLVHFIHRWWAWAVVAVLVV), and 299 to 321 (IVLHSVFGTQVLLGIFTVWSGVA). H272 provides a ligand contact to heme. H328 is a heme binding site.

Belongs to the COX15/CtaA family. Type 2 subfamily. In terms of assembly, interacts with CtaB. It depends on heme b as a cofactor.

It localises to the cell membrane. The catalysed reaction is Fe(II)-heme o + 2 A + H2O = Fe(II)-heme a + 2 AH2. It functions in the pathway porphyrin-containing compound metabolism; heme A biosynthesis; heme A from heme O: step 1/1. Functionally, catalyzes the conversion of heme O to heme A by two successive hydroxylations of the methyl group at C8. The first hydroxylation forms heme I, the second hydroxylation results in an unstable dihydroxymethyl group, which spontaneously dehydrates, resulting in the formyl group of heme A. The chain is Heme A synthase from Novosphingobium aromaticivorans (strain ATCC 700278 / DSM 12444 / CCUG 56034 / CIP 105152 / NBRC 16084 / F199).